A 329-amino-acid chain; its full sequence is Sex comb on midleg-like protein 1 (329 aa).

The interval 125–194 (NEVHESFSYP…SDFSEHNYQP (70 aa)) is disordered. At Ser-138 the chain carries Phosphoserine. The segment covering 159–168 (FRMEEYQRAE) has biased composition (basic and acidic residues). Ser-238 bears the Phosphoserine mark. The 68-residue stretch at 258–325 (WSVEAVVLFL…YYIDRLKQGK (68 aa)) folds into the SAM domain.

This sequence belongs to the SCM family. In terms of tissue distribution, highly expressed in testis and pancreas. Preferentially expressed in the germ stem cells of testis.

The protein localises to the nucleus. Putative Polycomb group (PcG) protein. PcG proteins act by forming multiprotein complexes, which are required to maintain the transcriptionally repressive state of homeotic genes throughout development. May be involved in spermatogenesis during sexual maturation. The chain is Sex comb on midleg-like protein 1 (SCML1) from Macaca mulatta (Rhesus macaque).